Reading from the N-terminus, the 264-residue chain is Thymidylate synthase (264 aa).

A dUMP-binding site is contributed by arginine 21. Histidine 51 is a binding site for (6R)-5,10-methylene-5,6,7,8-tetrahydrofolate. Residue 126–127 (RR) coordinates dUMP. Cysteine 146 serves as the catalytic Nucleophile. DUMP-binding positions include 166–169 (RSAD), asparagine 177, and 207–209 (HLY). Aspartate 169 provides a ligand contact to (6R)-5,10-methylene-5,6,7,8-tetrahydrofolate. Position 263 (alanine 263) interacts with (6R)-5,10-methylene-5,6,7,8-tetrahydrofolate.

This sequence belongs to the thymidylate synthase family. Bacterial-type ThyA subfamily. In terms of assembly, homodimer.

Its subcellular location is the cytoplasm. It catalyses the reaction dUMP + (6R)-5,10-methylene-5,6,7,8-tetrahydrofolate = 7,8-dihydrofolate + dTMP. Its pathway is pyrimidine metabolism; dTTP biosynthesis. Its function is as follows. Catalyzes the reductive methylation of 2'-deoxyuridine-5'-monophosphate (dUMP) to 2'-deoxythymidine-5'-monophosphate (dTMP) while utilizing 5,10-methylenetetrahydrofolate (mTHF) as the methyl donor and reductant in the reaction, yielding dihydrofolate (DHF) as a by-product. This enzymatic reaction provides an intracellular de novo source of dTMP, an essential precursor for DNA biosynthesis. This is Thymidylate synthase from Nitrosomonas europaea (strain ATCC 19718 / CIP 103999 / KCTC 2705 / NBRC 14298).